The primary structure comprises 634 residues: Chaperone protein HtpG (634 aa).

Residues 1–343 (MTEAENRVTL…SDSLPLNVSR (343 aa)) form an a; substrate-binding region. The tract at residues 344–560 (EILQENKQLE…SYGMSRTMER (217 aa)) is b. Residues 561–634 (IMKSAGQNIP…KLNGLLQSLL (74 aa)) are c.

This sequence belongs to the heat shock protein 90 family. In terms of assembly, homodimer.

It localises to the cytoplasm. Its function is as follows. Molecular chaperone. Has ATPase activity. The protein is Chaperone protein HtpG of Methylococcus capsulatus (strain ATCC 33009 / NCIMB 11132 / Bath).